An 880-amino-acid polypeptide reads, in one-letter code: Probable dipeptidyl-aminopeptidase B (880 aa).

A compositionally biased stretch (basic and acidic residues) spans 1-26 (MPRQRAPKEEEAELLTKQERSARSSE). A disordered region spans residues 1–71 (MPRQRAPKEE…KYTDEDDEAQ (71 aa)). Over 1 to 93 (MPRQRAPKEE…PISVDKKTRR (93 aa)) the chain is Cytoplasmic. A compositionally biased stretch (low complexity) spans 30-40 (DTSISSISTTS). Residues 94–114 (WLWIVGIACVTGWALALVFFL) traverse the membrane as a helical; Signal-anchor for type II membrane protein segment. The Vacuolar portion of the chain corresponds to 115–880 (MSGSYKHVST…AQVDARMERR (766 aa)). A glycan (N-linked (GlcNAc...) asparagine) is linked at Asn533. Ser724 (charge relay system) is an active-site residue. Residue Asn778 is glycosylated (N-linked (GlcNAc...) asparagine). Catalysis depends on charge relay system residues Asp801 and His834.

It belongs to the peptidase S9B family.

It localises to the vacuole membrane. The catalysed reaction is Release of an N-terminal dipeptide, Xaa-Yaa-|-Zaa-, from a polypeptide, preferentially when Yaa is Pro, provided Zaa is neither Pro nor hydroxyproline.. Type IV dipeptidyl-peptidase which removes N-terminal dipeptides sequentially from polypeptides having unsubstituted N-termini provided that the penultimate residue is proline. The sequence is that of Probable dipeptidyl-aminopeptidase B (dapB) from Pyrenophora tritici-repentis (strain Pt-1C-BFP) (Wheat tan spot fungus).